Here is a 379-residue protein sequence, read N- to C-terminus: 3-dehydroquinate synthase (379 aa).

Residues 67-72 (PGEKNK), 101-105 (GIVLD), 125-126 (TT), Lys-138, and Lys-147 contribute to the NAD(+) site. Residues Glu-180, His-242, and His-258 each coordinate Zn(2+).

Belongs to the sugar phosphate cyclases superfamily. Dehydroquinate synthase family. It depends on NAD(+) as a cofactor. Co(2+) serves as cofactor. The cofactor is Zn(2+).

It localises to the cytoplasm. The enzyme catalyses 7-phospho-2-dehydro-3-deoxy-D-arabino-heptonate = 3-dehydroquinate + phosphate. It participates in metabolic intermediate biosynthesis; chorismate biosynthesis; chorismate from D-erythrose 4-phosphate and phosphoenolpyruvate: step 2/7. Functionally, catalyzes the conversion of 3-deoxy-D-arabino-heptulosonate 7-phosphate (DAHP) to dehydroquinate (DHQ). This is 3-dehydroquinate synthase from Chlamydia felis (strain Fe/C-56) (Chlamydophila felis).